We begin with the raw amino-acid sequence, 346 residues long: Probable RNA methyltransferase PA14_40730 (346 aa).

E91 functions as the Proton acceptor in the catalytic mechanism. The 227-residue stretch at 94–320 (LLPRGGLCVS…TKVRNSAGQD (227 aa)) folds into the Radical SAM core domain. Residues C101 and C325 are joined by a disulfide bond. [4Fe-4S] cluster-binding residues include C108, C112, and C115. Residues 153–154 (GE), S183, 206–208 (SLH), and N282 each bind S-adenosyl-L-methionine. C325 serves as the catalytic S-methylcysteine intermediate.

Belongs to the radical SAM superfamily. RlmN family. [4Fe-4S] cluster serves as cofactor.

It localises to the cytoplasm. This is Probable RNA methyltransferase PA14_40730 from Pseudomonas aeruginosa (strain UCBPP-PA14).